We begin with the raw amino-acid sequence, 319 residues long: MSEEHSNDHIEDVVLCSQNCDETNSPKNEKDEKDFKNFSSESSDSYYKNKFRLKKNSIEIKKKSLLKSKLKNDDIQTIIKNDPILSKLNKTMTTDDEIFDLANKKENKTKFKLEKEKEKNEKKEKKEKKVTNDSTNNKNKNNSVPFLNENQENKNQHNHNNKIKYELNEQTYDINNISEEILKKENHHTNIEYNEKVQDQDNTLNINQKVNKIQLNSTKKQKQKEKTKKEIKLNEQNEIKKNNQNFNSSILNEIKKNKELSPLSLIKKHGRLINNIEEIYNSNCEQIQNVRDEFAELKNDLNKIMNLINIGQKAVASLK.

Residues M1 to D12 are compositionally biased toward basic and acidic residues. 2 disordered regions span residues M1 to S43 and K112 to N158. The span at C16–P26 shows a compositional bias: polar residues. 2 stretches are compositionally biased toward basic and acidic residues: residues K27 to K36 and K112 to T131. Coiled coils occupy residues D100 to S134, E166 to N242, and N281 to I310. Low complexity predominate over residues N132–N150.

This is Coiled-coil domain-containing protein PF3D7_1144200 from Plasmodium falciparum (isolate 3D7).